The following is an 803-amino-acid chain: Isoamylase 1, chloroplastic (803 aa).

Residues 1–54 (MASLPHCLSARPLVVAAAPGRPGPGPGPWLRGGARRRNAAFSAGNAGRRVGLRR) constitute a chloroplast transit peptide. Aspartate 432 acts as the Nucleophile in catalysis. Catalysis depends on glutamate 488, which acts as the Proton donor.

The protein belongs to the glycosyl hydrolase 13 family. In terms of assembly, forms a homo-pentamer and a hetero-hexamer composed of five ISA1 and one ISA2. Interacts with FLO6/SIP4. Highly expressed in developing endosperm. Expressed at low levels in leaves.

The protein localises to the plastid. Its subcellular location is the chloroplast. It catalyses the reaction Hydrolysis of (1-&gt;6)-alpha-D-glucosidic branch linkages in glycogen, amylopectin and their beta-limit dextrins.. It functions in the pathway glycan biosynthesis; starch biosynthesis. Inhibited by copper chloride, mercury chloride, ammonium molybdate and para-chloromercuribenzoate. Functionally, starch-debranching enzyme involved in amylopectin biosynthesis in endosperm. Functions by removing excess branches or improper branches that interfere with the formation of double helices of the cluster chains of amylopectin and crystallization of starch. Works as ISA1 homooligomer or together with ISA2 as heterooligomer. The heterooligomer ISA1 and ISA2 possesses higher affinity than the ISA1 homooligomer for various branched polyglucans in vitro, but no marked differences exist in chain preferences for debranching of amylopectin and phytoglycogen between these forms. In Oryza sativa subsp. japonica (Rice), this protein is Isoamylase 1, chloroplastic.